We begin with the raw amino-acid sequence, 183 residues long: Calcineurin subunit B type 2 (183 aa).

G2 is lipidated: N-myristoyl glycine. EF-hand domains follow at residues 25–60, 64–92, 94–129, and 135–170; these read REIK…SMNP, RIIS…FHPK, DKAD…MVGS, and QISS…SGCN. 4 residues coordinate Ca(2+): D107, N109, D111, and E118.

It belongs to the calcineurin regulatory subunit family. As to quaternary structure, calcineurin is composed of a catalytic subunit (A) and a regulatory subunit (B).

Its function is as follows. Regulatory subunit of calcineurin, a calcium-dependent, calmodulin stimulated protein phosphatase. Confers calcium sensitivity. This is Calcineurin subunit B type 2 (cnbB) from Dictyostelium discoideum (Social amoeba).